The sequence spans 120 residues: Small ribosomal subunit protein uS13 (120 aa).

Positions 93-120 (RRGLPCRGQKTKTNARTRKGKRKTVGAA) are disordered.

This sequence belongs to the universal ribosomal protein uS13 family. Part of the 30S ribosomal subunit. Forms a loose heterodimer with protein S19. Forms two bridges to the 50S subunit in the 70S ribosome.

Its function is as follows. Located at the top of the head of the 30S subunit, it contacts several helices of the 16S rRNA. In the 70S ribosome it contacts the 23S rRNA (bridge B1a) and protein L5 of the 50S subunit (bridge B1b), connecting the 2 subunits; these bridges are implicated in subunit movement. Contacts the tRNAs in the A and P-sites. This is Small ribosomal subunit protein uS13 from Sulfurovum sp. (strain NBC37-1).